A 228-amino-acid polypeptide reads, in one-letter code: 3-oxoadipate CoA-transferase subunit A (228 aa).

25–31 (GGFGTAG) contributes to the CoA binding site.

Belongs to the 3-oxoacid CoA-transferase subunit A family. As to quaternary structure, heterodimer.

The enzyme catalyses 3-oxoadipate + succinyl-CoA = 3-oxoadipyl-CoA + succinate. The protein operates within aromatic compound metabolism; beta-ketoadipate pathway; acetyl-CoA and succinyl-CoA from 3-oxoadipate: step 1/2. The sequence is that of 3-oxoadipate CoA-transferase subunit A (pcaI) from Acinetobacter baylyi (strain ATCC 33305 / BD413 / ADP1).